Consider the following 156-residue polypeptide: ATP synthase subunit b (156 aa).

Residues 7–29 (LFAQMVVFLVLAWFTMKFVWPPL) traverse the membrane as a helical segment.

This sequence belongs to the ATPase B chain family. As to quaternary structure, F-type ATPases have 2 components, F(1) - the catalytic core - and F(0) - the membrane proton channel. F(1) has five subunits: alpha(3), beta(3), gamma(1), delta(1), epsilon(1). F(0) has three main subunits: a(1), b(2) and c(10-14). The alpha and beta chains form an alternating ring which encloses part of the gamma chain. F(1) is attached to F(0) by a central stalk formed by the gamma and epsilon chains, while a peripheral stalk is formed by the delta and b chains.

It is found in the cell inner membrane. Its function is as follows. F(1)F(0) ATP synthase produces ATP from ADP in the presence of a proton or sodium gradient. F-type ATPases consist of two structural domains, F(1) containing the extramembraneous catalytic core and F(0) containing the membrane proton channel, linked together by a central stalk and a peripheral stalk. During catalysis, ATP synthesis in the catalytic domain of F(1) is coupled via a rotary mechanism of the central stalk subunits to proton translocation. Component of the F(0) channel, it forms part of the peripheral stalk, linking F(1) to F(0). The protein is ATP synthase subunit b of Burkholderia cenocepacia (strain ATCC BAA-245 / DSM 16553 / LMG 16656 / NCTC 13227 / J2315 / CF5610) (Burkholderia cepacia (strain J2315)).